Reading from the N-terminus, the 195-residue chain is MIRKVKPEIRVVGFDDGTFSFSSKVAHGRTILVGVVMKGAREVVGVLSRWITVDGTDATEKLIDAVVNSRFKDLRVIMLKGVTYGGFNIVDLDKLYLETGLPVLVVIRKKPDLRAMEAALRKHFPDWRERFEVLRRAPPLFELIPGKLYLQTVGLSPETAAEIVRTTTKTGLIPEPLRLAHMIASAVMTGESTKE.

The protein belongs to the UPF0215 family.

The sequence is that of UPF0215 protein TGAM_0348 from Thermococcus gammatolerans (strain DSM 15229 / JCM 11827 / EJ3).